Here is a 65-residue protein sequence, read N- to C-terminus: MNMKILVLVAVLCLVVSTHAERHSKTDMGDSPMIQERKCLPPGKPCYGATQKIPCCGVCSHNNCT.

Residues 1 to 20 form the signal peptide; that stretch reads MNMKILVLVAVLCLVVSTHA. The propeptide occupies 21–37; sequence ERHSKTDMGDSPMIQER. 3 disulfides stabilise this stretch: Cys-39-Cys-56, Cys-46-Cys-59, and Cys-55-Cys-64.

The protein belongs to the neurotoxin 36 family. 02 subfamily. Expressed by the venom gland.

Its subcellular location is the secreted. Reversibly blocks N-type calcium channels (Cav2.2/CACNA1B) in rat dorsal root ganglion cells. Elicits no toxic symptoms in either vertebrates or invertebrates during a period of 48 hours post-injection, when it was assayed in vivo by direct injection into mice and cockroaches. This chain is Hainantoxin-X.3, found in Cyriopagopus hainanus (Chinese bird spider).